The primary structure comprises 160 residues: uncharacterized protein (160 aa).

The RING-type zinc-finger motif lies at 8-46 (CAVCLDFFVEPCIIECGHSYCRFCIESHLNINEKCPLCR).

This is an uncharacterized protein from Caenorhabditis elegans.